Here is a 400-residue protein sequence, read N- to C-terminus: Na(+)/H(+) antiporter NhaA 1 (400 aa).

Transmembrane regions (helical) follow at residues 25–45 (IVLMFCAIIAIIIANSNFSSM), 67–87 (ILHWINDGLMAIFFLVVGMEI), 103–123 (ILPVSAAIGGMVVPAIIYALF), 130–150 (IIGWGIPMATDIAFALGILSL), 159–179 (IIIFLTALAIVDDLGAIIVIA), 184–204 (SEISWIALILGLIIFLAIILA), 213–233 (WLYIIFGIALWICFLKSGVHE), 264–284 (VLTPLSSFIIMPIFALANSGI), 303–323 (IIFGLFIGKQIGIFGASYILV), 339–359 (LYGASVLGGIGFTMSLFVSSL), and 372–392 (ISIIIASILSAAFGAAIFKII).

It belongs to the NhaA Na(+)/H(+) (TC 2.A.33) antiporter family.

It is found in the cell membrane. It carries out the reaction Na(+)(in) + 2 H(+)(out) = Na(+)(out) + 2 H(+)(in). Its function is as follows. Na(+)/H(+) antiporter that extrudes sodium in exchange for external protons. The chain is Na(+)/H(+) antiporter NhaA 1 from Clostridium beijerinckii (strain ATCC 51743 / NCIMB 8052) (Clostridium acetobutylicum).